A 122-amino-acid chain; its full sequence is Large ribosomal subunit protein bL12 (122 aa).

It belongs to the bacterial ribosomal protein bL12 family. Homodimer. Part of the ribosomal stalk of the 50S ribosomal subunit. Forms a multimeric L10(L12)X complex, where L10 forms an elongated spine to which 2 to 4 L12 dimers bind in a sequential fashion. Binds GTP-bound translation factors.

Functionally, forms part of the ribosomal stalk which helps the ribosome interact with GTP-bound translation factors. Is thus essential for accurate translation. The chain is Large ribosomal subunit protein bL12 from Flavobacterium psychrophilum (strain ATCC 49511 / DSM 21280 / CIP 103535 / JIP02/86).